The chain runs to 103 residues: Large ribosomal subunit protein mL41 (103 aa).

It belongs to the mitochondrion-specific ribosomal protein mL41 family. Component of the mitochondrial large ribosomal subunit (mt-LSU). Mature N.crassa 74S mitochondrial ribosomes consist of a small (37S) and a large (54S) subunit. The 37S small subunit contains a 16S ribosomal RNA (16S mt-rRNA) and 32 different proteins. The 54S large subunit contains a 23S rRNA (23S mt-rRNA) and 42 different proteins.

It localises to the mitochondrion. Its function is as follows. Component of the mitochondrial ribosome (mitoribosome), a dedicated translation machinery responsible for the synthesis of mitochondrial genome-encoded proteins, including at least some of the essential transmembrane subunits of the mitochondrial respiratory chain. The mitoribosomes are attached to the mitochondrial inner membrane and translation products are cotranslationally integrated into the membrane. The sequence is that of Large ribosomal subunit protein mL41 (mrpl27) from Neurospora crassa (strain ATCC 24698 / 74-OR23-1A / CBS 708.71 / DSM 1257 / FGSC 987).